The sequence spans 496 residues: NADP-dependent glyceraldehyde-3-phosphate dehydrogenase (496 aa).

Substrate-binding positions include Arg116 and 169-170 (NY). Residues Lys192, Thr195, and Asp230 each coordinate NADP(+). 245-249 (GGDTG) contributes to the NAD(+) binding site. The active-site Proton acceptor is Glu264. Position 297–299 (297–299 (RCT)) interacts with substrate. The Nucleophile role is filled by Cys298. Residue Glu391 participates in NADP(+) binding. Arg451 contributes to the substrate binding site.

This sequence belongs to the aldehyde dehydrogenase family.

Its subcellular location is the cytoplasm. The protein localises to the cytosol. It catalyses the reaction D-glyceraldehyde 3-phosphate + NADP(+) + H2O = (2R)-3-phosphoglycerate + NADPH + 2 H(+). Its activity is regulated as follows. Competitive inhibition by NADPH, 3-phospho-D-glycerate and ATP. In terms of biological role, important as a means of generating NADPH for biosynthetic reactions. May be a main source of cytosolic NADPH for mannitol biosynthesis in leaves. This Apium graveolens (Celery) protein is NADP-dependent glyceraldehyde-3-phosphate dehydrogenase.